Consider the following 87-residue polypeptide: Conotoxin Ca6.2 (87 aa).

Residues 1-19 form the signal peptide; it reads MHTLEMLLLVLLLVPLAPG. A propeptide spanning residues 20 to 52 is cleaved from the precursor; the sequence is EGDGQAVGGDRNPSEARRAYKRLLQRPARRMDR. Intrachain disulfides connect C55–C64, C58–C70, and C63–C84.

Belongs to the conotoxin Q superfamily. As to expression, expressed by the venom duct.

The protein localises to the secreted. The protein is Conotoxin Ca6.2 of Conus caracteristicus (Characteristic cone).